Consider the following 87-residue polypeptide: Small ribosomal subunit protein bS20 (87 aa).

The segment at 1–26 (MANIKSAKKRAVQSEKARKHNASRRS) is disordered.

The protein belongs to the bacterial ribosomal protein bS20 family.

Binds directly to 16S ribosomal RNA. In Salmonella typhi, this protein is Small ribosomal subunit protein bS20.